We begin with the raw amino-acid sequence, 209 residues long: GTP cyclohydrolase 1 (209 aa).

Cysteine 100, histidine 103, and cysteine 171 together coordinate Zn(2+).

Belongs to the GTP cyclohydrolase I family. As to quaternary structure, toroid-shaped homodecamer, composed of two pentamers of five dimers.

The catalysed reaction is GTP + H2O = 7,8-dihydroneopterin 3'-triphosphate + formate + H(+). It participates in cofactor biosynthesis; 7,8-dihydroneopterin triphosphate biosynthesis; 7,8-dihydroneopterin triphosphate from GTP: step 1/1. In Ralstonia nicotianae (strain ATCC BAA-1114 / GMI1000) (Ralstonia solanacearum), this protein is GTP cyclohydrolase 1.